Consider the following 426-residue polypeptide: Colanic acid biosynthesis protein WcaK (426 aa).

It belongs to the polysaccharide pyruvyl transferase family.

Its pathway is slime biogenesis; slime polysaccharide biosynthesis. The polypeptide is Colanic acid biosynthesis protein WcaK (wcaK) (Escherichia coli (strain K12)).